The sequence spans 219 residues: Probable transcriptional regulator flp (219 aa).

In terms of domain architecture, HTH crp-type spans 144–212 (DSINVRLTHY…GKQVRILNAE (69 aa)). The H-T-H motif DNA-binding region spans 191–210 (KRLAEEKLIERSGKQVRILN).

This chain is Probable transcriptional regulator flp (flp), found in Lacticaseibacillus casei (Lactobacillus casei).